A 414-amino-acid polypeptide reads, in one-letter code: Protein ABHD18 (414 aa).

The signal sequence occupies residues 1–24 (MGVSKLDILYRRLLLTKLFIRGWG). N-linked (GlcNAc...) asparagine glycans are attached at residues Asn-282 and Asn-307.

It belongs to the AB hydrolase superfamily.

Its subcellular location is the secreted. The polypeptide is Protein ABHD18 (Homo sapiens (Human)).